The primary structure comprises 440 residues: Argininosuccinate lyase (440 aa).

It belongs to the lyase 1 family. Argininosuccinate lyase subfamily.

Its subcellular location is the cytoplasm. The catalysed reaction is 2-(N(omega)-L-arginino)succinate = fumarate + L-arginine. It functions in the pathway amino-acid biosynthesis; L-arginine biosynthesis; L-arginine from L-ornithine and carbamoyl phosphate: step 3/3. This chain is Argininosuccinate lyase, found in Clostridium botulinum (strain Loch Maree / Type A3).